A 146-amino-acid chain; its full sequence is Hemoglobin subunit beta (146 aa).

The Globin domain occupies 2–146 (EWTDFERATI…VVNSLGRQYH (145 aa)). His63 and His92 together coordinate heme b.

This sequence belongs to the globin family. Heterotetramer of two alpha chains and two beta chains. Can form polymers. As to expression, red blood cells.

Involved in oxygen transport from gills to the various peripheral tissues. The sequence is that of Hemoglobin subunit beta (hbb) from Chelidonichthys kumu (Bluefin gurnard).